Here is a 2138-residue protein sequence, read N- to C-terminus: Conidial yellow pigment biosynthesis polyketide synthase melA (2138 aa).

The segment at 8-244 (YLFGDQTADF…TRVPIHGPYH (237 aa)) is N-terminal acylcarrier protein transacylase domain (SAT). The 432-residue stretch at 373–804 (QSKIAIIGLS…GGNTALMVED (432 aa)) folds into the Ketosynthase family 3 (KS3) domain. Catalysis depends on for beta-ketoacyl synthase activity residues Cys545, His680, and His722. The malonyl-CoA:ACP transacylase (MAT) domain stretch occupies residues 910–1229 (FVFTGQGAQY…VSALYMAGIE (320 aa)). Catalysis depends on Ser999, which acts as the For acyl/malonyl transferase activity. The segment at 1288–1601 (SSAAQRVLET…RKILDMALPP (314 aa)) is product template (PT) domain. The segment at 1292 to 1423 (QRVLETSGDN…CNIKFFDPSP (132 aa)) is N-terminal hotdog fold. Residues 1292–1596 (QRVLETSGDN…FQGLARKILD (305 aa)) form the PKS/mFAS DH domain. Residue His1324 is the Proton acceptor; for dehydratase activity of the active site. Positions 1451-1596 (AHRMKRGMVY…FQGLARKILD (146 aa)) are C-terminal hotdog fold. Asp1509 serves as the catalytic Proton donor; for dehydratase activity. The Carrier 1 domain maps to 1640–1714 (PSMATRALAI…DFKHLLAQMG (75 aa)). The residue at position 1674 (Ser1674) is an O-(pantetheine 4'-phosphoryl)serine. The interval 1712 to 1758 (QMGPGESSDGSSSEGDMSSAASSTDLSSPNTSGLPTPANEKSMTHGL) is disordered. Positions 1713–1739 (MGPGESSDGSSSEGDMSSAASSTDLSS) are enriched in low complexity. Positions 1740-1758 (PNTSGLPTPANEKSMTHGL) are enriched in polar residues. The Carrier 2 domain maps to 1759-1836 (QGQNDSMRQI…DIETTLDLKP (78 aa)). Position 1796 is an O-(pantetheine 4'-phosphoryl)serine (Ser1796). Residues 1863-2135 (TQHPPATSIL…ELARFIANSM (273 aa)) form a claisen cyclase domain region. The active-site For Claisen cyclase activity is Ser1953.

It catalyses the reaction 6 malonyl-CoA + acetyl-CoA + 6 H(+) = naphtopyrone YWA1 + 6 CO2 + 7 CoA + H2O. The protein operates within pigment biosynthesis. It participates in polyketide biosynthesis; heptaketide naphthopyrone YWA1 biosynthesis. Functionally, non-reducing polyketide synthase involved in the biosynthesis of a yellow conidial pigment. Probably forms the heptaketide naphthopyrene YWA1 via condensation of acetate units. The polypeptide is Conidial yellow pigment biosynthesis polyketide synthase melA (Penicillium expansum (Blue mold rot fungus)).